Consider the following 289-residue polypeptide: 4-diphosphocytidyl-2-C-methyl-D-erythritol kinase (289 aa).

Lysine 15 is an active-site residue. Residue 100-110 coordinates ATP; sequence PVSAGLAGGSA. Aspartate 140 is an active-site residue.

This sequence belongs to the GHMP kinase family. IspE subfamily.

It carries out the reaction 4-CDP-2-C-methyl-D-erythritol + ATP = 4-CDP-2-C-methyl-D-erythritol 2-phosphate + ADP + H(+). Its pathway is isoprenoid biosynthesis; isopentenyl diphosphate biosynthesis via DXP pathway; isopentenyl diphosphate from 1-deoxy-D-xylulose 5-phosphate: step 3/6. Catalyzes the phosphorylation of the position 2 hydroxy group of 4-diphosphocytidyl-2C-methyl-D-erythritol. The chain is 4-diphosphocytidyl-2-C-methyl-D-erythritol kinase from Anaplasma marginale (strain Florida).